The sequence spans 157 residues: Cyclic pyranopterin monophosphate synthase (157 aa).

Residues 74–76 (MCH) and 112–113 (ME) each bind substrate. The active site involves Asp-127.

Belongs to the MoaC family. Homohexamer; trimer of dimers.

It carries out the reaction (8S)-3',8-cyclo-7,8-dihydroguanosine 5'-triphosphate = cyclic pyranopterin phosphate + diphosphate. It functions in the pathway cofactor biosynthesis; molybdopterin biosynthesis. Its function is as follows. Catalyzes the conversion of (8S)-3',8-cyclo-7,8-dihydroguanosine 5'-triphosphate to cyclic pyranopterin monophosphate (cPMP). The polypeptide is Cyclic pyranopterin monophosphate synthase (Sulfurovum sp. (strain NBC37-1)).